The chain runs to 291 residues: F-box protein PP2-A12 (291 aa).

The 47-residue stretch at 25–71 folds into the F-box domain; sequence KPGLGDLPEACVAIIVENLDPVEICRFSKLNRAFRGASWADCVWESK.

The sequence is that of F-box protein PP2-A12 (P2A12) from Arabidopsis thaliana (Mouse-ear cress).